A 412-amino-acid polypeptide reads, in one-letter code: Sterol-4-alpha-carboxylate 3-dehydrogenase erg26, decarboxylating (412 aa).

NADP(+)-binding positions include 17–23 (GGCGFLG), 89–90 (DI), and 111–113 (TAT). The substrate site is built by serine 158 and tyrosine 188. NADP(+)-binding positions include tyrosine 188, lysine 192, and 217 to 220 (PAGI). The active-site Proton donor is lysine 192.

Belongs to the 3-beta-HSD family. As to quaternary structure, heterotetramer of erg25, erg26, erg27 and erg28. Erg28 acts as a scaffold to tether erg27 and other 4,4-demethylation-related enzymes, forming a demethylation enzyme complex, in the endoplasmic reticulum.

The protein localises to the endoplasmic reticulum membrane. The protein operates within steroid metabolism; ergosterol biosynthesis. Functionally, sterol-C4-methyl oxidase; part of the third module of ergosterol biosynthesis pathway that includes the late steps of the pathway. Erg26 is a catalytic component of the C-4 demethylation complex that catalyzes the conversion of 4,4-dimethylfecosterol into fecosterol via 4-methylfecosterol. The third module or late pathway involves the ergosterol synthesis itself through consecutive reactions that mainly occur in the endoplasmic reticulum (ER) membrane. Firstly, the squalene synthase erg9 catalyzes the condensation of 2 farnesyl pyrophosphate moieties to form squalene, which is the precursor of all steroids. Squalene synthase is crucial for balancing the incorporation of farnesyl diphosphate (FPP) into sterol and nonsterol isoprene synthesis. Secondly, squalene is converted into lanosterol by the consecutive action of the squalene epoxidase erg1 and the lanosterol synthase erg7. Then, the delta(24)-sterol C-methyltransferase erg6 methylates lanosterol at C-24 to produce eburicol. Eburicol is the substrate of the sterol 14-alpha demethylase encoded by cyp51A and cyp51B, to yield 4,4,24-trimethyl ergosta-8,14,24(28)-trienol. The C-14 reductase erg24 then reduces the C14=C15 double bond which leads to 4,4-dimethylfecosterol. A sequence of further demethylations at C-4, involving the C-4 demethylation complex containing the C-4 methylsterol oxidases erg25A or erg25B, the sterol-4-alpha-carboxylate 3-dehydrogenase erg26 and the 3-keto-steroid reductase erg27, leads to the production of fecosterol via 4-methylfecosterol. The C-8 sterol isomerase erg2 then catalyzes the reaction which results in unsaturation at C-7 in the B ring of sterols and thus converts fecosterol to episterol. The sterol-C5-desaturase erg3B then catalyzes the introduction of a C-5 double bond in the B ring to produce 5-dehydroepisterol. The 2 other sterol-C5-desaturases, erg3A and erg3C, seem to be less important in ergosterol biosynthesis. The C-22 sterol desaturase erg5 further converts 5-dehydroepisterol into ergosta-5,7,22,24(28)-tetraen-3beta-ol by forming the C-22(23) double bond in the sterol side chain. Finally, ergosta-5,7,22,24(28)-tetraen-3beta-ol is substrate of the C-24(28) sterol reductases erg4A and erg4B to produce ergosterol. Possible alternative sterol biosynthetic pathways might exist from fecosterol to ergosterol, depending on the activities of the erg3 isoforms. The protein is Sterol-4-alpha-carboxylate 3-dehydrogenase erg26, decarboxylating of Aspergillus fumigatus (strain ATCC MYA-4609 / CBS 101355 / FGSC A1100 / Af293) (Neosartorya fumigata).